The chain runs to 153 residues: Mediator of RNA polymerase II transcription subunit 22 (153 aa).

It belongs to the Mediator complex subunit 22 family. In terms of assembly, component of the Mediator complex.

It is found in the nucleus. Its function is as follows. Component of the Mediator complex, a coactivator involved in the regulated transcription of nearly all RNA polymerase II-dependent genes. Mediator functions as a bridge to convey information from gene-specific regulatory proteins to the basal RNA polymerase II transcription machinery. Mediator is recruited to promoters by direct interactions with regulatory proteins and serves as a scaffold for the assembly of a functional preinitiation complex with RNA polymerase II and the general transcription factors. The sequence is that of Mediator of RNA polymerase II transcription subunit 22 (mdt-22) from Caenorhabditis briggsae.